Consider the following 193-residue polypeptide: MAKDVQKVAKLQFLAGKAKPGPSLAGVGVNMPEFTKAFNDATRDRGDEPVPVQITVFKDKTFEFKLFTAPASYKIKQAAKIQSGSKNAKTTIAGTITLEQLKEIAEYKLPDLNTDDVNAAMAIVAGTAKQMGVLVEGYDDVAKAKQAAIEAAKAESLAKAKKESLKSQEEELKASKGKAIDVNVIEKEREEKE.

This sequence belongs to the universal ribosomal protein uL11 family. As to quaternary structure, part of the ribosomal stalk of the 50S ribosomal subunit. Interacts with L10 and the large rRNA to form the base of the stalk. L10 forms an elongated spine to which L12 dimers bind in a sequential fashion forming a multimeric L10(L12)X complex. In terms of processing, one or more lysine residues are methylated.

Forms part of the ribosomal stalk which helps the ribosome interact with GTP-bound translation factors. This is Large ribosomal subunit protein uL11 from Mycoplasmopsis synoviae (strain 53) (Mycoplasma synoviae).